Here is a 170-residue protein sequence, read N- to C-terminus: Adenine phosphoribosyltransferase (170 aa).

It belongs to the purine/pyrimidine phosphoribosyltransferase family. In terms of assembly, homodimer.

Its subcellular location is the cytoplasm. It catalyses the reaction AMP + diphosphate = 5-phospho-alpha-D-ribose 1-diphosphate + adenine. The protein operates within purine metabolism; AMP biosynthesis via salvage pathway; AMP from adenine: step 1/1. In terms of biological role, catalyzes a salvage reaction resulting in the formation of AMP, that is energically less costly than de novo synthesis. This is Adenine phosphoribosyltransferase from Bacillus cereus (strain G9842).